The primary structure comprises 656 residues: uncharacterized protein (656 aa).

Residues 623-656 (EIDIPGTPASIDPEWSRPPGSITDDHVFDAPLHR) are disordered. Positions 645–656 (TDDHVFDAPLHR) are enriched in basic and acidic residues.

This is an uncharacterized protein from Mycobacterium tuberculosis (strain ATCC 25618 / H37Rv).